Reading from the N-terminus, the 243-residue chain is LexA repressor 2 (243 aa).

Positions 48–68 (IREIGDAVGLTSTSSVAHQLR) form a DNA-binding region, H-T-H motif. Active-site for autocatalytic cleavage activity residues include Ser167 and Lys204.

It belongs to the peptidase S24 family. As to quaternary structure, homodimer.

The enzyme catalyses Hydrolysis of Ala-|-Gly bond in repressor LexA.. Functionally, represses a number of genes involved in the response to DNA damage (SOS response), including recA and lexA. In the presence of single-stranded DNA, RecA interacts with LexA causing an autocatalytic cleavage which disrupts the DNA-binding part of LexA, leading to derepression of the SOS regulon and eventually DNA repair. This is LexA repressor 2 from Nocardia farcinica (strain IFM 10152).